Here is a 669-residue protein sequence, read N- to C-terminus: DNA ligase (669 aa).

Residues 34–38 (DAEYD), 83–84 (SL), and glutamate 114 contribute to the NAD(+) site. The active-site N6-AMP-lysine intermediate is lysine 116. NAD(+) is bound by residues arginine 137, glutamate 171, lysine 287, and lysine 311. Residues cysteine 405, cysteine 408, cysteine 423, and cysteine 428 each contribute to the Zn(2+) site. One can recognise a BRCT domain in the interval 591 to 669 (NVESYFAGKT…EERFLQELNK (79 aa)).

This sequence belongs to the NAD-dependent DNA ligase family. LigA subfamily. Mg(2+) is required as a cofactor. The cofactor is Mn(2+).

The catalysed reaction is NAD(+) + (deoxyribonucleotide)n-3'-hydroxyl + 5'-phospho-(deoxyribonucleotide)m = (deoxyribonucleotide)n+m + AMP + beta-nicotinamide D-nucleotide.. DNA ligase that catalyzes the formation of phosphodiester linkages between 5'-phosphoryl and 3'-hydroxyl groups in double-stranded DNA using NAD as a coenzyme and as the energy source for the reaction. It is essential for DNA replication and repair of damaged DNA. The chain is DNA ligase from Bacillus cereus (strain AH187).